We begin with the raw amino-acid sequence, 484 residues long: Allantoinase, mitochondrial (484 aa).

The Zn(2+) site is built by histidine 76, histidine 78, lysine 163, histidine 199, histidine 251, and aspartate 324. Residue lysine 163 is modified to N6-carboxylysine.

This sequence belongs to the metallo-dependent hydrolases superfamily. Allantoinase family. In terms of assembly, homotetramer. The cofactor is Zn(2+). Post-translationally, carboxylation allows a single lysine to coordinate two zinc ions. In terms of tissue distribution, liver and kidney.

The protein resides in the mitochondrion. It carries out the reaction (S)-allantoin + H2O = allantoate + H(+). The protein operates within nitrogen metabolism; (S)-allantoin degradation; allantoate from (S)-allantoin: step 1/1. In Aquarana catesbeiana (American bullfrog), this protein is Allantoinase, mitochondrial (ALN).